A 131-amino-acid polypeptide reads, in one-letter code: Holo-[acyl-carrier-protein] synthase (131 aa).

The Mg(2+) site is built by Asp8 and Glu63.

Belongs to the P-Pant transferase superfamily. AcpS family. Mg(2+) is required as a cofactor.

The protein localises to the cytoplasm. It carries out the reaction apo-[ACP] + CoA = holo-[ACP] + adenosine 3',5'-bisphosphate + H(+). Transfers the 4'-phosphopantetheine moiety from coenzyme A to a Ser of acyl-carrier-protein. The chain is Holo-[acyl-carrier-protein] synthase from Shewanella halifaxensis (strain HAW-EB4).